Reading from the N-terminus, the 125-residue chain is Fluoride-specific ion channel FluC (125 aa).

4 helical membrane-spanning segments follow: residues 3–23 (FILIAIGGAFGALFRYFVSKV), 33–53 (IPLGTVIVNVLGAFLLSFVLF), 65–85 (FVLFFGTGFLGAFTTFSTFAY), and 99–119 (LVYFFANLFFGFFAAFFGMVL). Glycine 75 and threonine 78 together coordinate Na(+).

It belongs to the fluoride channel Fluc/FEX (TC 1.A.43) family.

Its subcellular location is the cell inner membrane. It catalyses the reaction fluoride(in) = fluoride(out). With respect to regulation, na(+) is not transported, but it plays an essential structural role and its presence is essential for fluoride channel function. Functionally, fluoride-specific ion channel. Important for reducing fluoride concentration in the cell, thus reducing its toxicity. The chain is Fluoride-specific ion channel FluC from Thermosipho melanesiensis (strain DSM 12029 / CIP 104789 / BI429).